Consider the following 273-residue polypeptide: Progestin and adipoQ receptor family member 4 (273 aa).

5 helical membrane-spanning segments follow: residues I52–W72, G79–Y99, L115–I135, L185–C205, and L245–A265.

Belongs to the ADIPOR family. In terms of assembly, interacts with CERS2 and CERS5; the interaction regulates CERS2 and CERS5 stabilities and activities and is inhibited in presence of ceramides. In terms of tissue distribution, expressed in adipose tissue.

It localises to the golgi apparatus membrane. In terms of biological role, plays a role in maintaining adipose tissue function through the regulation of ceramide levels. Mediates the stability of ceramide synthetases, CERS2 and CERS5, and their activities. This Mus musculus (Mouse) protein is Progestin and adipoQ receptor family member 4.